A 616-amino-acid polypeptide reads, in one-letter code: Protein phosphatase EYA4 (616 aa).

The residue at position 1 (Met1) is an N-acetylmethionine. Disordered regions lie at residues 1–66 (MEDT…VTTN), 186–211 (SQTQ…PGQT), and 277–345 (ADGT…DSDL). Residues Lys14 and Lys52 each participate in a glycyl lysine isopeptide (Lys-Gly) (interchain with G-Cter in SUMO2) cross-link. Over residues 56–66 (SGLSSTSVTTN) the composition is skewed to low complexity. Residues 277-311 (ADGTSSSTSTYQLQESLQGLTSQPGEFDTVQSPST) are compositionally biased toward polar residues. The residue at position 338 (Ser338) is a Phosphoserine. Catalysis depends on Asp352, which acts as the Nucleophile. Positions 352, 354, and 580 each coordinate Mg(2+). Asp354 functions as the Proton donor in the catalytic mechanism.

The protein belongs to the HAD-like hydrolase superfamily. EYA family. Interacts with SIX3; translocates EYA4 from the cytoplasm to the nucleus and promotes activation of their target genes. Mg(2+) is required as a cofactor. As to expression, in the embryo, expressed mainly in the craniofacial mesenchyme, dermamyotome and limb.

It is found in the cytoplasm. The protein localises to the nucleus. The enzyme catalyses O-phospho-L-tyrosyl-[protein] + H2O = L-tyrosyl-[protein] + phosphate. Tyrosine phosphatase that specifically dephosphorylates 'Tyr-142' of histone H2AX (H2AXY142ph). 'Tyr-142' phosphorylation of histone H2AX plays a central role in DNA repair and acts as a mark that distinguishes between apoptotic and repair responses to genotoxic stress. Promotes efficient DNA repair by dephosphorylating H2AX, promoting the recruitment of DNA repair complexes containing MDC1. Its function as histone phosphatase probably explains its role in transcription regulation during organogenesis. May be involved in development of the eye. The chain is Protein phosphatase EYA4 (Eya4) from Mus musculus (Mouse).